The primary structure comprises 72 residues: Galensin (72 aa).

The first 22 residues, 1-22 (MLTLKKSMLLLFFLGLVSVSLA), serve as a signal peptide directing secretion. The propeptide occupies 23 to 48 (DDKREDEAEEGEDKRAAEEERNVEKR). A Phenylalanine amide modification is found at Phe-71.

The protein belongs to the frog skin active peptide (FSAP) family. Brevinin subfamily. As to quaternary structure, homodimer; disulfide-linked. As to expression, expressed by the skin glands.

It is found in the secreted. Functionally, antibacterial activity against the Gram-positive bacterium M.luteus and the Gram-negative bacterium E.coli. The sequence is that of Galensin from Kassina senegalensis (Senegal running frog).